The chain runs to 72 residues: Translation initiation factor IF-1 (72 aa).

The S1-like domain occupies 1–72 (MSKDDVIEMQ…TRGRITWRAK (72 aa)).

It belongs to the IF-1 family. In terms of assembly, component of the 30S ribosomal translation pre-initiation complex which assembles on the 30S ribosome in the order IF-2 and IF-3, IF-1 and N-formylmethionyl-tRNA(fMet); mRNA recruitment can occur at any time during PIC assembly.

It localises to the cytoplasm. Functionally, one of the essential components for the initiation of protein synthesis. Stabilizes the binding of IF-2 and IF-3 on the 30S subunit to which N-formylmethionyl-tRNA(fMet) subsequently binds. Helps modulate mRNA selection, yielding the 30S pre-initiation complex (PIC). Upon addition of the 50S ribosomal subunit IF-1, IF-2 and IF-3 are released leaving the mature 70S translation initiation complex. This Clostridium botulinum (strain ATCC 19397 / Type A) protein is Translation initiation factor IF-1.